Consider the following 25-residue polypeptide: Tubulin alpha chain (25 aa).

Glutamine 11 serves as a coordination point for GTP.

The protein belongs to the tubulin family. As to quaternary structure, dimer of alpha and beta chains. A typical microtubule is a hollow water-filled tube with an outer diameter of 25 nm and an inner diameter of 15 nM. Alpha-beta heterodimers associate head-to-tail to form protofilaments running lengthwise along the microtubule wall with the beta-tubulin subunit facing the microtubule plus end conferring a structural polarity. Microtubules usually have 13 protofilaments but different protofilament numbers can be found in some organisms and specialized cells. The cofactor is Mg(2+).

The protein localises to the cytoplasm. Its subcellular location is the cytoskeleton. It catalyses the reaction GTP + H2O = GDP + phosphate + H(+). Tubulin is the major constituent of microtubules, a cylinder consisting of laterally associated linear protofilaments composed of alpha- and beta-tubulin heterodimers. Microtubules grow by the addition of GTP-tubulin dimers to the microtubule end, where a stabilizing cap forms. Below the cap, tubulin dimers are in GDP-bound state, owing to GTPase activity of alpha-tubulin. In Leptomonas seymouri, this protein is Tubulin alpha chain.